A 367-amino-acid polypeptide reads, in one-letter code: uncharacterized protein (367 aa).

The protein resides in the mitochondrion. This is an uncharacterized protein from Paramecium tetraurelia.